The following is a 381-amino-acid chain: Queuine tRNA-ribosyltransferase (381 aa).

The active-site Proton acceptor is the D92. Substrate-binding positions include 92–96 (DSGGF), D146, Q190, and G217. The RNA binding stretch occupies residues 248 to 254 (GVGRPED). Residue D267 is the Nucleophile of the active site. Positions 272-276 (TRNAR) are RNA binding; important for wobble base 34 recognition. Zn(2+)-binding residues include C305, C307, C310, and H337.

The protein belongs to the queuine tRNA-ribosyltransferase family. In terms of assembly, homodimer. Within each dimer, one monomer is responsible for RNA recognition and catalysis, while the other monomer binds to the replacement base PreQ1. It depends on Zn(2+) as a cofactor.

The catalysed reaction is 7-aminomethyl-7-carbaguanine + guanosine(34) in tRNA = 7-aminomethyl-7-carbaguanosine(34) in tRNA + guanine. It functions in the pathway tRNA modification; tRNA-queuosine biosynthesis. Functionally, catalyzes the base-exchange of a guanine (G) residue with the queuine precursor 7-aminomethyl-7-deazaguanine (PreQ1) at position 34 (anticodon wobble position) in tRNAs with GU(N) anticodons (tRNA-Asp, -Asn, -His and -Tyr). Catalysis occurs through a double-displacement mechanism. The nucleophile active site attacks the C1' of nucleotide 34 to detach the guanine base from the RNA, forming a covalent enzyme-RNA intermediate. The proton acceptor active site deprotonates the incoming PreQ1, allowing a nucleophilic attack on the C1' of the ribose to form the product. After dissociation, two additional enzymatic reactions on the tRNA convert PreQ1 to queuine (Q), resulting in the hypermodified nucleoside queuosine (7-(((4,5-cis-dihydroxy-2-cyclopenten-1-yl)amino)methyl)-7-deazaguanosine). This chain is Queuine tRNA-ribosyltransferase, found in Xanthomonas campestris pv. campestris (strain B100).